Reading from the N-terminus, the 217-residue chain is MQIFLDSTDTKVIADLASTGLIDGVTTNPTLIAKSGRPMLEVIAEICDIVPGPISAEVAATTADAMIAEGQKLAKIAPNVVVKIPLTRDGLIACAAFADEEIKTNVTLCFSPTQALLAAKAGATYISPFIGRLDDYGFDGMDLIRDIRAIYDNYGYETEILAASVRNAAHVKEAAIVGADVVTIPPAVFSDLYKHPLTDKGLEQFLKDWASTGQSIL.

K83 functions as the Schiff-base intermediate with substrate in the catalytic mechanism.

The protein belongs to the transaldolase family. Type 3B subfamily.

Its subcellular location is the cytoplasm. The enzyme catalyses D-sedoheptulose 7-phosphate + D-glyceraldehyde 3-phosphate = D-erythrose 4-phosphate + beta-D-fructose 6-phosphate. It participates in carbohydrate degradation; pentose phosphate pathway; D-glyceraldehyde 3-phosphate and beta-D-fructose 6-phosphate from D-ribose 5-phosphate and D-xylulose 5-phosphate (non-oxidative stage): step 2/3. In terms of biological role, transaldolase is important for the balance of metabolites in the pentose-phosphate pathway. The protein is Probable transaldolase of Caulobacter vibrioides (strain NA1000 / CB15N) (Caulobacter crescentus).